Reading from the N-terminus, the 338-residue chain is Delta(9)-fatty-acid desaturase fat-7 (338 aa).

4 helical membrane-spanning segments follow: residues 51–71 (VALF…LVFH), 76–96 (TAVF…AGAH), 194–214 (YFPL…VYFW), and 218–238 (AFIA…HATW).

It belongs to the fatty acid desaturase type 1 family. In terms of tissue distribution, expressed in the intestine in adult worms and in all four larval stages.

The protein localises to the membrane. The enzyme catalyses octadecanoyl-CoA + 2 Fe(II)-[cytochrome b5] + O2 + 2 H(+) = (9Z)-octadecenoyl-CoA + 2 Fe(III)-[cytochrome b5] + 2 H2O. The catalysed reaction is hexadecanoyl-CoA + 2 Fe(II)-[cytochrome b5] + O2 + 2 H(+) = (9Z)-hexadecenoyl-CoA + 2 Fe(III)-[cytochrome b5] + 2 H2O. It catalyses the reaction heptadecanoyl-CoA + 2 Fe(II)-[cytochrome b5] + O2 + 2 H(+) = (9Z)-heptadecenoyl-CoA + 2 Fe(III)-[cytochrome b5] + 2 H2O. It carries out the reaction (11E)-octadecenoyl-CoA + 2 Fe(II)-[cytochrome b5] + O2 + 2 H(+) = (9Z,11E)-octadecadienoyl-CoA + 2 Fe(III)-[cytochrome b5] + 2 H2O. Its pathway is lipid metabolism; monounsaturated fatty acid biosynthesis. It functions in the pathway lipid metabolism; fatty acid metabolism. Its function is as follows. Delta(9)-fatty acid desaturase that acts preferentially on stearoyl-CoA (octadecanoyl-CoA) producing the monounsaturated oleoyl-CoA ((9Z)-octadecenoyl-CoA), one of the most abundant monounsaturated fatty acid in Caenorhabditis elegans phospholipids and triacylglycerols. Also acts on palmitoyl-CoA (hexadecanoyl-CoA), heptadecanoyl-CoA and (11E)-octadecenoyl-CoA (trans-vaccenoyl-CoA), the monounsaturated fatty acids (MUFAs) produced are further used by several other desaturases and elongases as substrates to synthesize polyunsaturated fatty acids (PUFAs) endogenously (PUFAs are essential for membrane structure and many cellular and physiological processes). Unlike plants, Caenorhabditis elegans desaturases seem to use fatty acyl-CoAs as substrates. Partially inhibits expression of genes involved in beta-oxidation, such as ech-1 and acs-2, perhaps signaling via the actions of one of its fatty acid products. May form part of a negative feedback loop with the transcription factor nhr-49 to limit beta-oxidation, in which nhr-49 stimulates expression of fat-7 and acs-2, and in turn fat-7 indirectly inhibits acs-2 and other genes also involved in beta-oxidation. The polypeptide is Delta(9)-fatty-acid desaturase fat-7 (fat-7) (Caenorhabditis elegans).